A 338-amino-acid polypeptide reads, in one-letter code: Putative transport protein TM_1349 (338 aa).

7 consecutive transmembrane segments (helical) span residues 20-40, 68-88, 147-167, 203-223, 239-259, 263-283, and 297-317; these read ILIS…IVLM, ALLL…PPVF, VSVT…VFYI, VIFI…EAFN, FIPI…SLTL, GVLL…VVFI, and IILS…FVGV.

Belongs to the autoinducer-2 exporter (AI-2E) (TC 2.A.86) family.

It is found in the cell membrane. This Thermotoga maritima (strain ATCC 43589 / DSM 3109 / JCM 10099 / NBRC 100826 / MSB8) protein is Putative transport protein TM_1349.